The sequence spans 447 residues: Elongation factor 1-alpha (447 aa).

One can recognise a tr-type G domain in the interval 5-230 (KVHINIVVIG…DNINEPKRPS (226 aa)). The segment at 14–21 (GHVDSGKS) is G1. Residue 14 to 21 (GHVDSGKS) coordinates GTP. Residue K55 is modified to N6,N6-dimethyllysine. A G2 region spans residues 70–74 (GITID). At K79 the chain carries N6,N6,N6-trimethyllysine. Positions 91-94 (DAPG) are G3. GTP-binding positions include 91–95 (DAPGH) and 153–156 (NKMD). Residues 153–156 (NKMD) form a G4 region. N6,N6,N6-trimethyllysine is present on K187. The segment at 194–196 (SGF) is G5. K261 carries the N6-methyllysine modification. E289 carries the 5-glutamyl glycerylphosphorylethanolamine modification. K306 bears the N6,N6,N6-trimethyllysine mark. 5-glutamyl glycerylphosphorylethanolamine is present on E362. N6,N6,N6-trimethyllysine is present on K396.

It belongs to the TRAFAC class translation factor GTPase superfamily. Classic translation factor GTPase family. EF-Tu/EF-1A subfamily.

It is found in the cytoplasm. In terms of biological role, this protein promotes the GTP-dependent binding of aminoacyl-tRNA to the A-site of ribosomes during protein biosynthesis. This Vicia faba (Broad bean) protein is Elongation factor 1-alpha.